The primary structure comprises 256 residues: MNLDALQQRLGYRFSKPELLQQALTHRSHSAQHNERLEFLGDSVLNCAVADMLFGMFGKLDEGDLSRVRANLVKQQALYEIAQMLQLSEVLRLGEGELKSGGFRRPSILADALEAIVGAVFLDAGFEAARTLIRKLYIPILEQVDPRTLGKDAKTLLQEYLQGHKIALPQYNVIATHGAAHSQQFEVECMVPKLEVRVFGTGASRRAAEQAAAKLALDEVQKLVPQLLKRSRAERTGKTRKQPVPPDPQLSLRLKE.

Positions 3 to 125 (LDALQQRLGY…IVGAVFLDAG (123 aa)) constitute an RNase III domain. Glu-38 contacts Mg(2+). The active site involves Asp-42. Residues Asp-111 and Glu-114 each contribute to the Mg(2+) site. The active site involves Glu-114. A DRBM domain is found at 152 to 222 (DAKTLLQEYL…AKLALDEVQK (71 aa)). The disordered stretch occupies residues 229–256 (KRSRAERTGKTRKQPVPPDPQLSLRLKE).

This sequence belongs to the ribonuclease III family. In terms of assembly, homodimer. Mg(2+) is required as a cofactor.

It localises to the cytoplasm. The catalysed reaction is Endonucleolytic cleavage to 5'-phosphomonoester.. In terms of biological role, digests double-stranded RNA. Involved in the processing of primary rRNA transcript to yield the immediate precursors to the large and small rRNAs (23S and 16S). Processes some mRNAs, and tRNAs when they are encoded in the rRNA operon. Processes pre-crRNA and tracrRNA of type II CRISPR loci if present in the organism. The chain is Ribonuclease 3 from Cupriavidus pinatubonensis (strain JMP 134 / LMG 1197) (Cupriavidus necator (strain JMP 134)).